The primary structure comprises 218 residues: Pyridoxine/pyridoxamine 5'-phosphate oxidase (218 aa).

Substrate-binding positions include Arg14 to Tyr17 and Lys72. FMN contacts are provided by residues Arg67 to Lys72, Tyr82 to Thr83, Arg88, Lys89, and Gln111. Substrate contacts are provided by Tyr129, Arg133, and Ser137. Residues Gln146–Ser147 and Trp191 each bind FMN. Residue Arg197–His199 coordinates substrate. Arg201 is an FMN binding site.

The protein belongs to the pyridoxamine 5'-phosphate oxidase family. Homodimer. FMN serves as cofactor.

It carries out the reaction pyridoxamine 5'-phosphate + O2 + H2O = pyridoxal 5'-phosphate + H2O2 + NH4(+). The enzyme catalyses pyridoxine 5'-phosphate + O2 = pyridoxal 5'-phosphate + H2O2. Its pathway is cofactor metabolism; pyridoxal 5'-phosphate salvage; pyridoxal 5'-phosphate from pyridoxamine 5'-phosphate: step 1/1. It functions in the pathway cofactor metabolism; pyridoxal 5'-phosphate salvage; pyridoxal 5'-phosphate from pyridoxine 5'-phosphate: step 1/1. Catalyzes the oxidation of either pyridoxine 5'-phosphate (PNP) or pyridoxamine 5'-phosphate (PMP) into pyridoxal 5'-phosphate (PLP). This chain is Pyridoxine/pyridoxamine 5'-phosphate oxidase, found in Escherichia coli O7:K1 (strain IAI39 / ExPEC).